The chain runs to 505 residues: Membrane-bound O-acyltransferase GUP1 (505 aa).

The Extracellular portion of the chain corresponds to 1–217 (MFKAAMDASN…VAPIPLTDYN (217 aa)). A helical membrane pass occupies residues 218–238 (FVNYMAYITYAPLFIAGPIIT). Over 239–266 (FNDYIYQSDYKAMSSVKDYKRTFIYFLR) the chain is Cytoplasmic. A helical membrane pass occupies residues 267 to 287 (FAFCILVMEFLLHFMYVVAVS). Residues 288 to 296 (KTKAWEGDT) lie on the Extracellular side of the membrane. Residues 297 to 317 (PFQLSMLGLFNLNIIWLKLLI) traverse the membrane as a helical segment. Residues 318-377 (PWRLFRLWSLIDGIDPPENMIRCMDNNFSTLAFWRAWHRSYNRWIIRYIYIPLGGGGKYR) lie on the Cytoplasmic side of the membrane. 2 helical membrane-spanning segments follow: residues 378-398 (ILNS…ELKL) and 399-419 (LMWG…TAIF). Histidine 392 is a catalytic residue. Residues 420–430 (KNYQHEPWYRH) lie on the Cytoplasmic side of the membrane. The chain crosses the membrane as a helical span at residues 431–451 (VCALGAVINIWMMMLANLFGF). At 452 to 464 (CMGKDGTMSLIKT) the chain is on the extracellular side. The chain crosses the membrane as a helical span at residues 465-485 (LFTTAVGLRFLFLSLGALFVG). The Cytoplasmic segment spans residues 486–505 (SQVMFELREAEKRRGVNVKC).

The protein belongs to the membrane-bound acyltransferase family.

The protein localises to the cell membrane. It is found in the endoplasmic reticulum membrane. It localises to the mitochondrion membrane. Functionally, membrane-bound O-acyltransferase involved in the remodeling of glycosylphosphatidylinositol (GPI) anchors. Acts only on GPI-anchored proteins, but not on free GPI lipids. Also involved in lipid metabolism, having profound effects on sphingolipid-sterol-ordered domains integrity and assembly. Involved in cell integrity and apoptosis. This chain is Membrane-bound O-acyltransferase GUP1 (GUP1), found in Millerozyma farinosa (Yeast).